A 297-amino-acid chain; its full sequence is 4-hydroxy-tetrahydrodipicolinate synthase (297 aa).

Residue T46 coordinates pyruvate. Y134 serves as the catalytic Proton donor/acceptor. K163 serves as the catalytic Schiff-base intermediate with substrate. I205 is a binding site for pyruvate.

This sequence belongs to the DapA family. As to quaternary structure, homotetramer; dimer of dimers.

It is found in the cytoplasm. It carries out the reaction L-aspartate 4-semialdehyde + pyruvate = (2S,4S)-4-hydroxy-2,3,4,5-tetrahydrodipicolinate + H2O + H(+). Its pathway is amino-acid biosynthesis; L-lysine biosynthesis via DAP pathway; (S)-tetrahydrodipicolinate from L-aspartate: step 3/4. Catalyzes the condensation of (S)-aspartate-beta-semialdehyde [(S)-ASA] and pyruvate to 4-hydroxy-tetrahydrodipicolinate (HTPA). The chain is 4-hydroxy-tetrahydrodipicolinate synthase from Thermoanaerobacter pseudethanolicus (strain ATCC 33223 / 39E) (Clostridium thermohydrosulfuricum).